The chain runs to 932 residues: Protein translocase subunit SecA (932 aa).

ATP contacts are provided by residues Q83, 101 to 105, and D491; that span reads GEGKT.

This sequence belongs to the SecA family. Monomer and homodimer. Part of the essential Sec protein translocation apparatus which comprises SecA, SecYEG and auxiliary proteins SecDF. Other proteins may also be involved.

The protein localises to the cell inner membrane. The protein resides in the cellular thylakoid membrane. Its subcellular location is the cytoplasm. The enzyme catalyses ATP + H2O + cellular proteinSide 1 = ADP + phosphate + cellular proteinSide 2.. Its function is as follows. Part of the Sec protein translocase complex. Interacts with the SecYEG preprotein conducting channel. Has a central role in coupling the hydrolysis of ATP to the transfer of proteins into and across the cell membrane, serving as an ATP-driven molecular motor driving the stepwise translocation of polypeptide chains across the membrane. Functionally, probably participates in protein translocation into and across both the cytoplasmic and thylakoid membranes in cyanobacterial cells. This Cyanothece sp. (strain PCC 7425 / ATCC 29141) protein is Protein translocase subunit SecA.